A 378-amino-acid polypeptide reads, in one-letter code: Acetylornithine deacetylase (378 aa).

H76 serves as a coordination point for Zn(2+). Residue D78 is part of the active site. D108 is a Zn(2+) binding site. Residue E140 is part of the active site. 3 residues coordinate Zn(2+): E141, E165, and H351.

It belongs to the peptidase M20A family. ArgE subfamily. As to quaternary structure, homodimer. Zn(2+) is required as a cofactor. The cofactor is Co(2+). Glutathione serves as cofactor.

The protein resides in the cytoplasm. The catalysed reaction is N(2)-acetyl-L-ornithine + H2O = L-ornithine + acetate. Its pathway is amino-acid biosynthesis; L-arginine biosynthesis; L-ornithine from N(2)-acetyl-L-ornithine (linear): step 1/1. In terms of biological role, catalyzes the hydrolysis of the amide bond of N(2)-acetylated L-amino acids. Cleaves the acetyl group from N-acetyl-L-ornithine to form L-ornithine, an intermediate in L-arginine biosynthesis pathway, and a branchpoint in the synthesis of polyamines. This Vibrio atlanticus (strain LGP32) (Vibrio splendidus (strain Mel32)) protein is Acetylornithine deacetylase.